Here is a 325-residue protein sequence, read N- to C-terminus: S-adenosylmethionine carrier 1, chloroplastic/mitochondrial (325 aa).

A chloroplast and mitochondrion-targeting transit peptide spans 1-38; it reads MAPLTLSVDVKSSSATSHDVSKRVMQSSQLKINKGFFA. 3 Solcar repeats span residues 52 to 124, 133 to 215, and 228 to 310; these read RTLF…TKQK, LSAV…LCLG, and ENAL…TKRT. 5 helical membrane passes run 55–75, 97–117, 132–152, 230–250, and 285–305; these read FEGFIAGGTAGVVVETALYPI, YSGLAGNIAGVLPASALFVGV, HLSAVAHLTAGAIGGLAASLI, ALIGAFAGALTGAVTTPLDVI, and GIGPRVLWIGIGGSIFFGVLE.

The protein belongs to the mitochondrial carrier (TC 2.A.29) family. As to expression, expressed in seedlings, cotyledons, leaves and flowers. Lower levels of expression in stems and roots. Not detected in senescent leaves, petals and pollen grains.

It localises to the mitochondrion membrane. Its subcellular location is the plastid. It is found in the chloroplast membrane. With respect to regulation, inhibited strongly by tannic acid, bromocresol purple, mercuric chloride, mersalyl, p-hydroxymercuribenzoate, S-adenosylhomocysteine, S-adenosylcysteine and adenosylornithine, and to a lesser extent by N-ethylmaleimide, bathophenanthroline and pyridoxal-5'-P. Its function is as follows. Transporter involved in exchange reactions through membranes. Has a low uniporter activity. Specifically mediates the transport of S-adenosylmethionine (SAM) and its closest analogs. Probably involved in the uptake of SAM in exchange for S-adenosylhomocysteine (SAHC), which is produced from SAM in the mitochondrial matrix and plastidial stroma by methyltransferase activities. This is S-adenosylmethionine carrier 1, chloroplastic/mitochondrial (SAMC1) from Arabidopsis thaliana (Mouse-ear cress).